A 116-amino-acid polypeptide reads, in one-letter code: MNFTLLVVVLLTAIAFVGVVIALSNAISPRSYNAQKFEAYECGIPTRGKSWMQFRVGYYLFAILFLMFDVETVFLFPWAVIARDLGPQGLISILFFLVVLVLGLAYAWKKGALEWK.

The next 3 helical transmembrane spans lie at 3–23 (FTLL…VIAL), 61–81 (FAIL…WAVI), and 88–108 (QGLI…AYAW).

The protein belongs to the complex I subunit 3 family. As to quaternary structure, NDH-1 is composed of 14 different subunits. Subunits NuoA, H, J, K, L, M, N constitute the membrane sector of the complex.

It localises to the cell inner membrane. It carries out the reaction a quinone + NADH + 5 H(+)(in) = a quinol + NAD(+) + 4 H(+)(out). NDH-1 shuttles electrons from NADH, via FMN and iron-sulfur (Fe-S) centers, to quinones in the respiratory chain. The immediate electron acceptor for the enzyme in this species is believed to be a menaquinone. Couples the redox reaction to proton translocation (for every two electrons transferred, four hydrogen ions are translocated across the cytoplasmic membrane), and thus conserves the redox energy in a proton gradient. In Bacteroides fragilis (strain ATCC 25285 / DSM 2151 / CCUG 4856 / JCM 11019 / LMG 10263 / NCTC 9343 / Onslow / VPI 2553 / EN-2), this protein is NADH-quinone oxidoreductase subunit A.